Consider the following 382-residue polypeptide: C-type lectin domain-containing protein 38 (382 aa).

Residues 1 to 40 (MAIFYDDPLERLNQPIKTKSYRKKQVVQRVHVFIFDNWKL) lie on the Cytoplasmic side of the membrane. A helical membrane pass occupies residues 41–61 (ILLGILNLIFLIIAIVFAILF). At 62–382 (FVGSADCAQL…FFLCKRAIDF (321 aa)) the chain is on the extracellular side. Residues 97–116 (NAITTTQGTPSNKTSTTTPS) are disordered. The span at 100–116 (TTTQGTPSNKTSTTTPS) shows a compositional bias: low complexity. 2 N-linked (GlcNAc...) asparagine glycosylation sites follow: Asn108 and Asn189. C-type lectin domains follow at residues 129–250 (VGTK…FVCE) and 264–377 (YNKN…FLCK). 4 cysteine pairs are disulfide-bonded: Cys150/Cys249, Cys223/Cys241, Cys285/Cys376, and Cys348/Cys368.

As to expression, expressed in ventral cord motor neurons and PLM touch neurons.

It localises to the membrane. Functionally, involved in negative modulation of unc-40-mediated axon outgrowth. Required for proper presynaptic development in axons that have reached their targets. May function in concert with E3 ubiquitin-protein ligase rpm-1 in regulating axon outgrowth. In Caenorhabditis elegans, this protein is C-type lectin domain-containing protein 38.